The sequence spans 405 residues: 8-amino-7-oxononanoate synthase (405 aa).

Substrate is bound at residue Arg-23. 114 to 115 (GY) contacts pyridoxal 5'-phosphate. Residue His-139 coordinates substrate. Positions 185, 213, and 245 each coordinate pyridoxal 5'-phosphate. At Lys-248 the chain carries N6-(pyridoxal phosphate)lysine. Thr-366 contributes to the substrate binding site.

This sequence belongs to the class-II pyridoxal-phosphate-dependent aminotransferase family. BioF subfamily. In terms of assembly, homodimer. Requires pyridoxal 5'-phosphate as cofactor.

It carries out the reaction 6-carboxyhexanoyl-[ACP] + L-alanine + H(+) = (8S)-8-amino-7-oxononanoate + holo-[ACP] + CO2. It functions in the pathway cofactor biosynthesis; biotin biosynthesis. Functionally, catalyzes the decarboxylative condensation of pimeloyl-[acyl-carrier protein] and L-alanine to produce 8-amino-7-oxononanoate (AON), [acyl-carrier protein], and carbon dioxide. This chain is 8-amino-7-oxononanoate synthase, found in Delftia acidovorans (strain DSM 14801 / SPH-1).